Consider the following 144-residue polypeptide: Interleukin-3 (144 aa).

The first 17 residues, 1-17 (MSSLSILHLLLLLLALH), serve as a signal peptide directing secretion.

It belongs to the IL-3 family. As to quaternary structure, monomer.

Its subcellular location is the secreted. Functionally, granulocyte/macrophage colony-stimulating factors are cytokines that act in hematopoiesis by controlling the production, differentiation, and function of 2 related white cell populations of the blood, the granulocytes and the monocytes-macrophages. This CSF induces granulocytes, macrophages, mast cells, stem cells, erythroid cells, eosinophils and megakaryocytes. The chain is Interleukin-3 (IL3) from Bos taurus (Bovine).